A 476-amino-acid polypeptide reads, in one-letter code: S-adenosylmethionine-dependent nucleotide dehydratase (476 aa).

A cytidylate kinase-like domain region spans residues 1–168 (MKTKITLSGF…LTANEVADLI (168 aa)). Residue 9–17 (GFAGTGKST) coordinates ATP. In terms of domain architecture, Radical SAM core spans 176-400 (NAVSKIPSVN…HKDVETIVPE (225 aa)). Residues 183–476 (SVNFHLWQPC…DLRKEEVSYE (294 aa)) form a prokaryotic viperin domain region. Residues Cys192, Cys196, and Cys199 each contribute to the [4Fe-4S] cluster site.

In the N-terminal section; belongs to the cytidylate kinase-like family. It in the C-terminal section; belongs to the radical SAM superfamily. Viperin family. [4Fe-4S] cluster is required as a cofactor.

It carries out the reaction GTP + AH2 + S-adenosyl-L-methionine = 3'-deoxy-3',4'-didehydro-GTP + 5'-deoxyadenosine + L-methionine + A + H2O + H(+). Expression of pVip60 in E.coli (strain MG1655) confers resistance to phage T7; prevents culture collapse upon infection. Catalyzes the conversion of guanosine triphosphate (GTP) to 3'-deoxy-3',4'-didehydro-GTP (ddhGTP), probably via a SAM-dependent radical mechanism. The modified nucleotide represses transcription from T7 RNA polymerase-directed genes (possibly by acting as chain terminators), strongly suggesting these nucleotides block viral polymerase transcription. Its function is as follows. The N-terminus of the protein may generate NTP for use by the viperin domain. The chain is S-adenosylmethionine-dependent nucleotide dehydratase from Lacinutrix mariniflava (strain JCM 13824 / KCCM 42306 / AKS432).